Reading from the N-terminus, the 711-residue chain is Polyribonucleotide nucleotidyltransferase (711 aa).

Residues Asp-486 and Asp-492 each contribute to the Mg(2+) site. Residues 553–612 (PRIHTIKINPDKIKDVIGKGGSVIRALTEETGTTIEIEDDGTVKIAATDGEKAKHAIRRI) form the KH domain. An S1 motif domain is found at 622–690 (GRVYTGKVTR…RQGRIRLSIK (69 aa)). The disordered stretch occupies residues 689–711 (IKEATEQSQPAAAPEAPAAEQGE). Residues 694 to 711 (EQSQPAAAPEAPAAEQGE) are compositionally biased toward low complexity.

Belongs to the polyribonucleotide nucleotidyltransferase family. Component of the RNA degradosome, which is a multiprotein complex involved in RNA processing and mRNA degradation. Mg(2+) serves as cofactor.

It is found in the cytoplasm. It catalyses the reaction RNA(n+1) + phosphate = RNA(n) + a ribonucleoside 5'-diphosphate. Its function is as follows. Involved in mRNA degradation. Catalyzes the phosphorolysis of single-stranded polyribonucleotides processively in the 3'- to 5'-direction. This chain is Polyribonucleotide nucleotidyltransferase, found in Escherichia coli (strain ATCC 8739 / DSM 1576 / NBRC 3972 / NCIMB 8545 / WDCM 00012 / Crooks).